The chain runs to 261 residues: MAATAREDGVRNLAQGPRGCEHYDRACLLKAPCCDKLYTCRLCHDTNEDHQLDRFKVKEVQCINCEKLQHAQQTCEDCSTLFGEYYCSICHLFDKDKRQYHCESCGICRIGPKEDFFHCLKCNLCLTTNLRGKHKCIENVSRQNCPICLEDIHTSRVVAHVLPCGHLLHRTCYEEMLKEGYRCPLCMHSALDMTRYWRQLDTEVAQTPMPSEYQNVTVDILCNDCNGRSTVQFHILGMKCKLCDSYNTAQAGGRRVPVDQQ.

The segment at 13-80 adopts a CHY-type zinc-finger fold; the sequence is LAQGPRGCEH…AQQTCEDCST (68 aa). Positions 20, 22, 33, 34, 40, 43, 44, 50, 62, 65, 75, 78, 87, 90, 101, 102, 105, 108, 118, 119, 122, 125, 134, and 136 each coordinate Zn(2+). Residues 82 to 144 form a CTCHY-type zinc finger; sequence FGEYYCSICH…KCIENVSRQN (63 aa). Residues 145-189 form an RING-type zinc finger; the sequence is CPICLEDIHTSRVVAHVLPCGHLLHRTCYEEMLKEGYRCPLCMHS.

As to quaternary structure, monomer and homodimer. Interacts with AR, MDM2, KAT5, PLAG1, PLAGL2, COPE, UBE2D2 and GORAB/NTKLBP1. Subject to ubiquitination and proteasomal degradation. Interaction with PLAGL2 or KAT5 enhances protein stability. As to expression, detected in testis, liver, kidney and heart.

It localises to the nucleus. The protein localises to the nucleus speckle. It is found in the cytoplasm. It carries out the reaction S-ubiquitinyl-[E2 ubiquitin-conjugating enzyme]-L-cysteine + [acceptor protein]-L-lysine = [E2 ubiquitin-conjugating enzyme]-L-cysteine + N(6)-ubiquitinyl-[acceptor protein]-L-lysine.. The protein operates within protein modification; protein ubiquitination. In terms of biological role, E3 ubiquitin-protein ligase that mediates ubiquitination of target proteins, including p53/TP53, TP73, HDAC1 and CDKN1B. Mediates ubiquitination and degradation of p53/TP53; preferentially acts on tetrameric p53/TP53. Catalyzes monoubiquitinates the translesion DNA polymerase POLH. Involved in the ribosome-associated quality control (RQC) pathway, which mediates the extraction of incompletely synthesized nascent chains from stalled ribosomes: RCHY1 acts downstream of NEMF and recognizes CAT tails associated with stalled nascent chains, leading to their ubiquitination and degradation. The polypeptide is RING finger and CHY zinc finger domain-containing protein 1 (Rchy1) (Mus musculus (Mouse)).